A 357-amino-acid polypeptide reads, in one-letter code: Mannonate dehydratase (357 aa).

The protein belongs to the mannonate dehydratase family. The cofactor is Fe(2+). It depends on Mn(2+) as a cofactor.

It catalyses the reaction D-mannonate = 2-dehydro-3-deoxy-D-gluconate + H2O. It functions in the pathway carbohydrate metabolism; pentose and glucuronate interconversion. Its function is as follows. Catalyzes the dehydration of D-mannonate. This Sorangium cellulosum (strain So ce56) (Polyangium cellulosum (strain So ce56)) protein is Mannonate dehydratase.